Reading from the N-terminus, the 156-residue chain is Ribosome-binding factor A (156 aa).

A disordered region spans residues 124–156 (TRAEYAGEAQPYRLEEEPEGSGDEVPPPGGDQR).

This sequence belongs to the RbfA family. As to quaternary structure, monomer. Binds 30S ribosomal subunits, but not 50S ribosomal subunits or 70S ribosomes.

It is found in the cytoplasm. In terms of biological role, one of several proteins that assist in the late maturation steps of the functional core of the 30S ribosomal subunit. Associates with free 30S ribosomal subunits (but not with 30S subunits that are part of 70S ribosomes or polysomes). Required for efficient processing of 16S rRNA. May interact with the 5'-terminal helix region of 16S rRNA. The sequence is that of Ribosome-binding factor A from Salinispora tropica (strain ATCC BAA-916 / DSM 44818 / JCM 13857 / NBRC 105044 / CNB-440).